A 181-amino-acid chain; its full sequence is MQYIPLKEKYENEIKPAMMKEFGYKNIHQVPRLEKIVINMGIGEGSRNKDVIDIHAKELALIAGQKPVVTKAKKSISNFKIRKGMPIGLKVTLRGVNMYNFLYKLINLVLPKVRDFRGLNPNGFDGRGNYSFGLTEQLVFPEISPDQVRRVQGMDIVIVTTAKTDDEARKLLELFGFPFKR.

It belongs to the universal ribosomal protein uL5 family. In terms of assembly, part of the 50S ribosomal subunit; part of the 5S rRNA/L5/L18/L25 subcomplex. Contacts the 5S rRNA and the P site tRNA. Forms a bridge to the 30S subunit in the 70S ribosome.

Functionally, this is one of the proteins that bind and probably mediate the attachment of the 5S RNA into the large ribosomal subunit, where it forms part of the central protuberance. In the 70S ribosome it contacts protein S13 of the 30S subunit (bridge B1b), connecting the 2 subunits; this bridge is implicated in subunit movement. Contacts the P site tRNA; the 5S rRNA and some of its associated proteins might help stabilize positioning of ribosome-bound tRNAs. This Thermosipho africanus (strain TCF52B) protein is Large ribosomal subunit protein uL5.